Reading from the N-terminus, the 385-residue chain is ATP phosphoribosyltransferase regulatory subunit (385 aa).

This sequence belongs to the class-II aminoacyl-tRNA synthetase family. HisZ subfamily. As to quaternary structure, heteromultimer composed of HisG and HisZ subunits.

The protein resides in the cytoplasm. It functions in the pathway amino-acid biosynthesis; L-histidine biosynthesis; L-histidine from 5-phospho-alpha-D-ribose 1-diphosphate: step 1/9. Required for the first step of histidine biosynthesis. May allow the feedback regulation of ATP phosphoribosyltransferase activity by histidine. This chain is ATP phosphoribosyltransferase regulatory subunit, found in Bordetella parapertussis (strain 12822 / ATCC BAA-587 / NCTC 13253).